The following is a 1163-amino-acid chain: AF4/FMR2 family member 4 (1163 aa).

Positions 1–19 (MNREDRNVLRMKERERRNQ) are enriched in basic and acidic residues. Disordered stretches follow at residues 1–48 (MNRE…EDKL), 76–312 (AIPK…ASGD), 324–904 (THSW…PRRT), and 1034–1073 (NSYN…SSGA). Polar residues predominate over residues 115 to 128 (PSTSQSQKRSSGLQ). Ser120 carries the phosphoserine modification. 2 stretches are compositionally biased toward low complexity: residues 129-148 (SGHS…NSSG) and 177-194 (RSSS…NSSH). Over residues 198 to 217 (HGNDHHSKEHQRSKSPRDPD) the composition is skewed to basic and acidic residues. Phosphoserine is present on Ser212. 3 stretches are compositionally biased toward polar residues: residues 227–251 (PFSS…SMLQ), 273–285 (EHYS…NSMT), and 350–375 (KESQ…NGHQ). Residues Ser387, Ser388, Ser389, and Ser392 each carry the phosphoserine modification. Positions 403 to 412 (PRSTPGSNSE) are enriched in polar residues. Basic and acidic residues predominate over residues 413 to 429 (PSHHNSEGADNSRDDSS). The segment covering 430–462 (SHSGSESSSGSDSESESSSSDSEANEPSQSASP) has biased composition (low complexity). 3 positions are modified to phosphoserine: Ser487, Ser490, and Ser491. Polar residues-rich tracts occupy residues 488 to 501 (PASS…SSQG), 510 to 528 (GTGN…SSAT), and 549 to 560 (SPAQSDSTTQRR). Position 549 is a phosphoserine (Ser549). Positions 568-586 (KKAEKAAAEEPRGGLKIES) are enriched in basic and acidic residues. Residue Lys583 forms a Glycyl lysine isopeptide (Lys-Gly) (interchain with G-Cter in SUMO2) linkage. Residues 599–612 (SRHKAATKGSRKPN) show a composition bias toward basic residues. Over residues 613-627 (IKKESKSSPRPTAEK) the composition is skewed to basic and acidic residues. Ser671 carries the post-translational modification Phosphoserine. Residue Thr674 is modified to Phosphothreonine. Ser680, Ser694, Ser703, and Ser706 each carry phosphoserine. Tyr712 carries the post-translational modification Phosphotyrosine. 3 stretches are compositionally biased toward basic and acidic residues: residues 730–761 (PYKE…EKVS), 769–789 (KNED…DKNS), and 799–811 (ESSK…EKDL). Ser814 bears the Phosphoserine mark. Lys822 carries the N6-acetyllysine modification. A phosphoserine mark is found at Ser836, Ser1043, Ser1055, Ser1058, and Ser1062. Low complexity predominate over residues 836–862 (SQSSSLKSSSNSNKETSGSSKNSSSTS). The span at 1062-1073 (SPGNSGNYSSGA) shows a compositional bias: low complexity.

Belongs to the AF4 family. Component of the super elongation complex (SEC), at least composed of EAF1, EAF2, CDK9, MLLT3/AF9, AFF (AFF1 or AFF4), the P-TEFb complex and ELL (ELL, ELL2 or ELL3). Interacts with ELL3; the interaction is direct. Interacts with ELL2; the interaction is direct and leads to stabilize ELL2 and prevent ELL2 ubiquitination and degradation. Dephosphorylated at Ser-549 by the PNUTS-PP1 complex, promoting RNA polymerase II transcription pause-release. In terms of tissue distribution, ubiquitously expressed. Strongly expressed in heart, placenta, skeletal muscle, pancreas and to a lower extent in brain.

Its subcellular location is the nucleus. The protein localises to the chromosome. Functionally, key component of the super elongation complex (SEC), a complex required to increase the catalytic rate of RNA polymerase II transcription by suppressing transient pausing by the polymerase at multiple sites along the DNA. In the SEC complex, AFF4 acts as a central scaffold that recruits other factors through direct interactions with ELL proteins (ELL, ELL2 or ELL3) and the P-TEFb complex. In case of infection by HIV-1 virus, the SEC complex is recruited by the viral Tat protein to stimulate viral gene expression. This chain is AF4/FMR2 family member 4 (AFF4), found in Homo sapiens (Human).